A 196-amino-acid polypeptide reads, in one-letter code: Alpha-crystallin A chain (196 aa).

Position 1 is an N-acetylmethionine (Met-1). The interval 1 to 63 is required for complex formation with BFSP1 and BFSP2; sequence MDVTIQHPWF…RTVLDSGISE (63 aa). The residue at position 6 (Gln-6) is a Deamidated glutamine; partial. Ser-45 bears the Phosphoserine mark. Residue Gln-50 is modified to Deamidated glutamine; partial. The region spanning 76-185 is the sHSP domain; sequence HAGNPKNNPV…GHSERAIPVS (110 aa). Residues Lys-93 and Lys-122 each carry the N6-acetyllysine modification. His-123 lines the Zn(2+) pocket. Asn-124 bears the Deamidated asparagine; partial mark. Zn(2+)-binding residues include Glu-125 and His-130. Ser-145 is subject to Phosphoserine. At Asn-146 the chain carries Deamidated asparagine; partial. Residues 168-196 form a disordered region; it reads KVQSGLDAGHSERAIPVSREEKPSSAPSS. Gln-170 bears the Deamidated glutamine; partial mark. Residues 176-190 show a composition bias toward basic and acidic residues; that stretch reads GHSERAIPVSREEKP. Zn(2+) is bound at residue His-177. O-linked (GlcNAc) serine glycosylation is present at Ser-185.

Belongs to the small heat shock protein (HSP20) family. Heteropolymer composed of three CRYAA and one CRYAB subunits. Inter-subunit bridging via zinc ions enhances stability, which is crucial as there is no protein turn over in the lens. Can also form homodimers and homotetramers (dimers of dimers) which serve as the building blocks of homooligomers. Within homooligomers, the zinc-binding motif is created from residues of 3 different molecules. His-123 and Glu-125 from one molecule are ligands of the zinc ion, and His-130 and His-177 residues from additional molecules complete the site with tetrahedral coordination geometry. Part of a complex required for lens intermediate filament formation composed of BFSP1, BFSP2 and CRYAA. Acetylation at Lys-93 may increase chaperone activity. In terms of processing, undergoes age-dependent proteolytical cleavage at the C-terminus.

It is found in the cytoplasm. It localises to the nucleus. Contributes to the transparency and refractive index of the lens. Acts as a chaperone, preventing aggregation of various proteins under a wide range of stress conditions. Required for the correct formation of lens intermediate filaments as part of a complex composed of BFSP1, BFSP2 and CRYAA. This is Alpha-crystallin A chain (Cryaa) from Mus musculus (Mouse).